The chain runs to 286 residues: Protein HEAT-STRESS-ASSOCIATED 32 (286 aa).

It belongs to the phosphosulfolactate synthase family.

In terms of biological role, transactivator required, together with HSP101, for long-term acquired thermotolerance (LAT) maintenance, probably by regulating heat-inducible genes expression, thus being a cellular component of thermomemory. The chain is Protein HEAT-STRESS-ASSOCIATED 32 from Arabidopsis thaliana (Mouse-ear cress).